Here is an 853-residue protein sequence, read N- to C-terminus: Leucine--tRNA ligase (853 aa).

Positions 40-50 (PYPSGKMHMGH) match the 'HIGH' region motif. The short motif at 609 to 613 (KMSKS) is the 'KMSKS' region element. Lysine 612 serves as a coordination point for ATP.

This sequence belongs to the class-I aminoacyl-tRNA synthetase family.

Its subcellular location is the cytoplasm. It catalyses the reaction tRNA(Leu) + L-leucine + ATP = L-leucyl-tRNA(Leu) + AMP + diphosphate. This is Leucine--tRNA ligase from Brachyspira hyodysenteriae (strain ATCC 49526 / WA1).